We begin with the raw amino-acid sequence, 274 residues long: Probable eukaryotic translation initiation factor 3 subunit J (274 aa).

Disordered stretches follow at residues 1–110 (MDSW…KEAM) and 207–245 (KEQQ…NVNS). Residues 38 to 47 (DEEDEDEEEN) are compositionally biased toward acidic residues. Positions 52 to 73 (QNDSHSVSQKSSSSSQNDQGSN) are enriched in low complexity. Residues 82–110 (IQERNFEKAIKASEAAAKEESLESSKEAM) are compositionally biased toward basic and acidic residues. The segment covering 219–234 (AAAPAAKPVSTAAPSK) has biased composition (low complexity).

This sequence belongs to the eIF-3 subunit J family. In terms of assembly, component of the eukaryotic translation initiation factor 3 (eIF-3) complex. The eIF-3 complex appears to include tif32/eif3a, SPAC25G10.08/eif3b, tif33/eif3c, SPBC4C3.07/eif3f, tif35/eif3g and sum1/eif3i. This set of common subunits may also associate exclusively with either moe1/eif3d and int6/eif3e, or with SPAC821.05/eif3h and SPAC1751.03/eif3m. The eIF-3 complex may also include SPAC3A12.13c/eif3j. Interacts with sad1.

Its subcellular location is the cytoplasm. Its function is as follows. Component of the eukaryotic translation initiation factor 3 (eIF-3) complex, which is involved in protein synthesis of a specialized repertoire of mRNAs and, together with other initiation factors, stimulates binding of mRNA and methionyl-tRNAi to the 40S ribosome. The eIF-3 complex specifically targets and initiates translation of a subset of mRNAs involved in cell proliferation. This is Probable eukaryotic translation initiation factor 3 subunit J from Schizosaccharomyces pombe (strain 972 / ATCC 24843) (Fission yeast).